A 248-amino-acid chain; its full sequence is 5'-nucleotidase SurE (248 aa).

Positions 8, 9, 39, and 91 each coordinate a divalent metal cation.

This sequence belongs to the SurE nucleotidase family. The cofactor is a divalent metal cation.

It is found in the cytoplasm. It catalyses the reaction a ribonucleoside 5'-phosphate + H2O = a ribonucleoside + phosphate. In terms of biological role, nucleotidase that shows phosphatase activity on nucleoside 5'-monophosphates. This Citrifermentans bemidjiense (strain ATCC BAA-1014 / DSM 16622 / JCM 12645 / Bem) (Geobacter bemidjiensis) protein is 5'-nucleotidase SurE.